The primary structure comprises 372 residues: Hydrogenase-1 small chain (372 aa).

A signal peptide (tat-type signal) is located at residues 1–45; it reads MNNEETFYQAMRRQGVTRRSFLKYCSLAATSLGLGAGMAPKIAWA. The Periplasmic segment spans residues 46–325; it reads LENKPRIPVV…PQMGTHSTAD (280 aa). The [4Fe-4S] cluster site is built by Cys62, Cys65, Cys160, Cys194, His232, Cys235, Cys260, and Cys266. The [3Fe-4S] cluster site is built by Cys275, Cys294, and Cys297. The chain crosses the membrane as a helical span at residues 326–346; the sequence is TVGLTALGVVAAAVGVHAVAS. The interval 346 to 372 is disordered; that stretch reads SSVDQRRRHNQQPTETEHQPGNEDKQA. Topologically, residues 347-372 are cytoplasmic; sequence SVDQRRRHNQQPTETEHQPGNEDKQA. A compositionally biased stretch (basic and acidic residues) spans 360-372; the sequence is ETEHQPGNEDKQA.

This sequence belongs to the [NiFe]/[NiFeSe] hydrogenase small subunit family. As to quaternary structure, heterodimer of a large and a small subunit. It depends on [4Fe-4S] cluster as a cofactor. [3Fe-4S] cluster serves as cofactor. In terms of processing, predicted to be exported by the Tat system. The position of the signal peptide cleavage has not been experimentally proven.

Its subcellular location is the cell inner membrane. The enzyme catalyses H2 + A = AH2. Functionally, this is one of three S.flexneri hydrogenases synthesized in response to different physiological conditions. HYD1 is believed to have a role in hydrogen cycling during fermentative growth. This chain is Hydrogenase-1 small chain (hyaA), found in Shigella flexneri.